Reading from the N-terminus, the 539-residue chain is Phosphoenolpyruvate carboxykinase (ATP) (539 aa).

Substrate contacts are provided by Arg64, Tyr206, and Lys212. Residues Lys212, His231, and Gly247–Thr255 contribute to the ATP site. The Mn(2+) site is built by Lys212 and His231. Asp268 contributes to the Mn(2+) binding site. Residues Glu296, Arg332, Arg448–Ile449, and Thr454 contribute to the ATP site. Arg332 lines the substrate pocket.

This sequence belongs to the phosphoenolpyruvate carboxykinase (ATP) family. Monomer. It depends on Mn(2+) as a cofactor.

It is found in the cytoplasm. The catalysed reaction is oxaloacetate + ATP = phosphoenolpyruvate + ADP + CO2. It participates in carbohydrate biosynthesis; gluconeogenesis. Functionally, involved in the gluconeogenesis. Catalyzes the conversion of oxaloacetate (OAA) to phosphoenolpyruvate (PEP) through direct phosphoryl transfer between the nucleoside triphosphate and OAA. This Salmonella choleraesuis (strain SC-B67) protein is Phosphoenolpyruvate carboxykinase (ATP).